The primary structure comprises 271 residues: uncharacterized protein (271 aa).

The protein belongs to the metallo-dependent hydrolases superfamily. Peptidase M19 family.

This is an uncharacterized protein from Klebsiella pneumoniae.